The chain runs to 3132 residues: Toxin CdiA (3132 aa).

A signal peptide (signal) is located at residues 1-32; the sequence is MHQPPVRFTYRLLSYLVSAIIAGQPLLPAVGA. The interval 36-322 is two-partner system transport domain (TPS); it reads PQNGAGMDKA…AGGNLSVTGT (287 aa). Residues 351–1378 are FHA-1; it reads GELTAGQNAM…ITMNTAHLLN (1028 aa). A receptor-binding domain (RBD) region spans residues 1379–1635; the sequence is SWDAISASHE…LSLSGASVSS (257 aa). The segment at 1636–1820 is YP domain; it reads YPLPSGNNGY…LSPEDITLHN (185 aa). The segment at 1821-1859 is periplasmic FHA-1 repeat (pFR); that stretch reads GSVISGNNVQLAGGNITNSGSSINAQNDLLLDRTGSIDN. The segment at 1930-2526 is FHA-2; that stretch reads RATDSLFMGA…QDSDRYDSRQ (597 aa). Disordered stretches follow at residues 2195–2228 and 2456–2497; these read TGTG…STIG and AGIN…SGAQ. Composition is skewed to polar residues over residues 2217–2228 and 2483–2497; these read GTTQSQSASTIG and VSLT…SGAQ. A pre-toxin (PT) domain region spans residues 2862–2904; the sequence is DNLSEQERQQISMLATIASGIAGGLVGNSTSAAGTGAQAGRNS. The short motif at 2905 to 2908 is the VENN CT cleavage motif element; that stretch reads VENN. Residues 2909–3121 form a C-terminal effector domain (CT) region; that stretch reads AMSGLEGFGT…IGTVTDYQIE (213 aa).

It in the N-terminal section; belongs to the CdiA toxin family. In terms of assembly, probably interacts with cognate immunity protein CdiI. Post-translationally, expressed as 303 kDa protein which can be processed to 284 kDa and 195 kDa forms.

It localises to the secreted. The protein resides in the target cell. Its subcellular location is the target cell cytoplasm. Toxic component of a toxin-immunity protein module, which functions as a cellular contact-dependent growth inhibition (CDI) system. CDI modules allow bacteria to communicate with and inhibit the growth of closely related neighboring bacteria (target cell counts decrease 1000- to 10(5)-fold) in a contact-dependent fashion. Inhibitory cells must be in logarithmic (not stationary) phase to inhibit growth of their targets, but protein synthesis is not necessary. The presence of P or S but not type 1 pili protects the target cells against growth inhibition for this CDI. BamA on the outer membrane of target cells acts as a receptor for CdiA, while target cell multidrug efflux pump AcrB facilitates its transport into the cytoplasm. Outer membrane receptor function is dependent on extracellular loops of BamA. Cells undergoing CDI show a 2- to 5-fold reversible decrease in aerobic respiration, proton motive force and steady-state ATP levels, suggesting this CT module is an ionophore that disrupts the target cell's inner cell membrane. Growth recovery requires an energy source. Cells expressing this protein in the absence of CdiI initially form filaments, some of which contain multiple nucleoids, while others are devoid of nucleoids. CDI cells induce the phage shock response, but pspA is not required for recovery from CDI. CDI is neutralized by its cognate immunity protein CdiI, but not by non-cognate CdiI from other bacteria with different CDI systems. Plays a role in biofilm formation, a region N-terminal to residue 644 is implicated in this receptor-independent cell adhesion. In terms of biological role, the CdiA protein is thought to be exported from the cell through the central lumen of CdiB, the other half of its two-partner system (TPS). The TPS domain probably remains associated with CdiB while the FHA-1 domain forms an extended filament (33 nm long) with the receptor-binding domain (RBD) at its extremity; in the secretion arrested state the C-terminus of the RBD and YP domains form a hairpin-like structure as the FHA-2, PT and CT domains are periplasmic. The YP domain is probably responsible for this arrest at the point where it re-enters the host cell periplasm. Upon binding to a target cell outer membrane receptor (BamA for this CDI) a signal is transmitted to activate secretion. The filament becomes about 5 nm longer, the rest of CdiA is secreted and the FHA-2 domain becomes stably associated with the target cell's outer membrane where it facilitates entry of the toxic CT domain into the target cell periplasm. From there the toxic CT domain is cleaved and gains access to the target cell cytoplasm via an inner membrane protein (multidrug efflux pump AcrB for this CDI). In Escherichia coli, this protein is Toxin CdiA.